A 210-amino-acid chain; its full sequence is MTTKDCGNHGGGGGGGTASRICGVIIGFIIIVLITIFLVWIILQPTKPRFILQDATVYAFNLSQPNLLTSNFQITIASRNRNSRIGIYYDRLHVYATYRNQQITLRTAIPPTYQGHKEDNVWSPFVYGNSVPIAPFNAVALGDEQNRGFVTLIIRADGRVRWKVGTLITGKYHLHVRCQAFINLADKAAGVHVGENAVKYMLINKCSVNV.

The chain crosses the membrane as a helical span at residues 23 to 43 (GVIIGFIIIVLITIFLVWIIL). N-linked (GlcNAc...) asparagine glycosylation is present at asparagine 61.

In terms of assembly, may form oligomers or be a component of larger protein complex in plasma membranes. As to expression, expressed in leaves, stems and flowers, and, to a lower extent, in siliques and roots.

It is found in the cell membrane. Its function is as follows. May play a role in plant immunity. This Arabidopsis thaliana (Mouse-ear cress) protein is NDR1/HIN1-like protein 12.